The chain runs to 191 residues: Fe/S biogenesis protein NfuA (191 aa).

Residues Cys149 and Cys152 each contribute to the [4Fe-4S] cluster site.

It belongs to the NfuA family. In terms of assembly, homodimer. [4Fe-4S] cluster is required as a cofactor.

Involved in iron-sulfur cluster biogenesis. Binds a 4Fe-4S cluster, can transfer this cluster to apoproteins, and thereby intervenes in the maturation of Fe/S proteins. Could also act as a scaffold/chaperone for damaged Fe/S proteins. The polypeptide is Fe/S biogenesis protein NfuA (Hamiltonella defensa subsp. Acyrthosiphon pisum (strain 5AT)).